The primary structure comprises 245 residues: DNA repair protein RecO (245 aa).

This sequence belongs to the RecO family.

Functionally, involved in DNA repair and RecF pathway recombination. This is DNA repair protein RecO from Chromobacterium violaceum (strain ATCC 12472 / DSM 30191 / JCM 1249 / CCUG 213 / NBRC 12614 / NCIMB 9131 / NCTC 9757 / MK).